Here is a 174-residue protein sequence, read N- to C-terminus: 3-hydroxydecanoyl-[acyl-carrier-protein] dehydratase (174 aa).

Histidine 71 is an active-site residue.

This sequence belongs to the thioester dehydratase family. FabA subfamily. As to quaternary structure, homodimer.

Its subcellular location is the cytoplasm. It catalyses the reaction a (3R)-hydroxyacyl-[ACP] = a (2E)-enoyl-[ACP] + H2O. It carries out the reaction (3R)-hydroxydecanoyl-[ACP] = (2E)-decenoyl-[ACP] + H2O. The catalysed reaction is (2E)-decenoyl-[ACP] = (3Z)-decenoyl-[ACP]. The protein operates within lipid metabolism; fatty acid biosynthesis. Functionally, necessary for the introduction of cis unsaturation into fatty acids. Catalyzes the dehydration of (3R)-3-hydroxydecanoyl-ACP to E-(2)-decenoyl-ACP and then its isomerization to Z-(3)-decenoyl-ACP. Can catalyze the dehydratase reaction for beta-hydroxyacyl-ACPs with saturated chain lengths up to 16:0, being most active on intermediate chain length. This is 3-hydroxydecanoyl-[acyl-carrier-protein] dehydratase from Nitrobacter hamburgensis (strain DSM 10229 / NCIMB 13809 / X14).